The sequence spans 178 residues: uncharacterized protein (178 aa).

An MSP domain is found at 52 to 177 (HIAIEDRAHQ…RRLPASFLST (126 aa)).

This is an uncharacterized protein from Caenorhabditis elegans.